The sequence spans 353 residues: Protein RecA (353 aa).

67 to 74 contacts ATP; that stretch reads GPESSGKT.

It belongs to the RecA family.

Its subcellular location is the cytoplasm. Functionally, can catalyze the hydrolysis of ATP in the presence of single-stranded DNA, the ATP-dependent uptake of single-stranded DNA by duplex DNA, and the ATP-dependent hybridization of homologous single-stranded DNAs. It interacts with LexA causing its activation and leading to its autocatalytic cleavage. This is Protein RecA from Shewanella loihica (strain ATCC BAA-1088 / PV-4).